The following is a 148-amino-acid chain: 3-dehydroquinate dehydratase (148 aa).

Tyr-26 functions as the Proton acceptor in the catalytic mechanism. Positions 77, 83, and 90 each coordinate substrate. The Proton donor role is filled by His-103. Substrate contacts are provided by residues 104–105 (LS) and Arg-114.

It belongs to the type-II 3-dehydroquinase family. In terms of assembly, homododecamer.

It catalyses the reaction 3-dehydroquinate = 3-dehydroshikimate + H2O. It participates in metabolic intermediate biosynthesis; chorismate biosynthesis; chorismate from D-erythrose 4-phosphate and phosphoenolpyruvate: step 3/7. In terms of biological role, catalyzes a trans-dehydration via an enolate intermediate. This Chlorobaculum tepidum (strain ATCC 49652 / DSM 12025 / NBRC 103806 / TLS) (Chlorobium tepidum) protein is 3-dehydroquinate dehydratase.